The sequence spans 101 residues: MKKVLALVVAAAMGLSSAAFAAETTATAAPAASTAAPAKTVHHKKHHKAAKPAAEQKAQAAKKHHKKAAKPAVEQKAQAAKKHHKKAAKHEAAKPAAQPAA.

Residues 1-21 form the signal peptide; that stretch reads MKKVLALVVAAAMGLSSAAFA. The propeptide occupies 22–59; it reads AETTATAAPAASTAAPAKTVHHKKHHKAAKPAAEQKAQ. Residues 26–39 show a composition bias toward low complexity; that stretch reads ATAAPAASTAAPAK. The segment at 26–101 is disordered; that stretch reads ATAAPAASTA…AAKPAAQPAA (76 aa). 3 stretches are compositionally biased toward basic residues: residues 40–50, 60–69, and 79–88; these read TVHHKKHHKAA and AAKKHHKKAA.

It belongs to the Asr family. Post-translationally, proteolytic processing gives rise to the active protein.

It is found in the periplasm. Required for growth and/or survival at acidic conditions. This chain is Acid shock protein (asr), found in Enterobacter cloacae.